Reading from the N-terminus, the 681-residue chain is MNHIDVTQRINELRTLIRRYDYHYYVLDDPIVSDAEYDALMNELRALEAAHPELITPDSPTQRVSGTPASQFAKVQHPQPMLSLGNAFTTTDLLAWRDRVLRLLGQDTAVAYVVEPKIDGLAVALTYHDGQFVQGATRGDGEVGEDVTANLRTISSIPLLLHPPDGGHDRDVPTALPSLIEVRGEVYMRTADFEALNDRLAAAGEKIFANPRNAAAGSLRQKDPAITAARPLRFFAYGVGPVEGVELTGQWQTLRYLRMLGFPVNQDVRRFTDFDEVLAYCEQWMARRDELTYEADGMVIKIDDFAQQRELGVVGRDPRWAIAFKFPPREAITRLLNITVNVGRTGVVTPNAELEPVQIGGVIVRNASLHNADYIAQRDIRIGDYVIVKRAGDVIPYVVGPVVARRDGSERPWQFPTHCPACGSPLEREPGEAAWRCNNFGICPAQLVRRLEHFASRAALDIVGLGERQAELFVQRGLVRDVADLFYLKAEDFAGLEGFGPKRIANLLNAIDAARQRPLDRLIVGLGIRYVGSVAAQALVNSLGSLDAIMNARQEELEQIPGIGPVVAASIVDFFAHPENRQLIEKLRAAGVQMNAGPQRERKSDVLAGQTFVLTGTLPSLTREQASALIIAHGGKVTDSVSKKTNYVVAGVNAGSKLAKAQQLGIPVLDEAALLALIGER.

NAD(+) is bound by residues 34 to 38 (DAEYD), 83 to 84 (SL), and E115. The N6-AMP-lysine intermediate role is filled by K117. 4 residues coordinate NAD(+): R138, E185, K301, and K325. Zn(2+) contacts are provided by C419, C422, C437, and C443. Residues 602 to 681 (RKSDVLAGQT…AALLALIGER (80 aa)) enclose the BRCT domain.

The protein belongs to the NAD-dependent DNA ligase family. LigA subfamily. Mg(2+) serves as cofactor. It depends on Mn(2+) as a cofactor.

It catalyses the reaction NAD(+) + (deoxyribonucleotide)n-3'-hydroxyl + 5'-phospho-(deoxyribonucleotide)m = (deoxyribonucleotide)n+m + AMP + beta-nicotinamide D-nucleotide.. In terms of biological role, DNA ligase that catalyzes the formation of phosphodiester linkages between 5'-phosphoryl and 3'-hydroxyl groups in double-stranded DNA using NAD as a coenzyme and as the energy source for the reaction. It is essential for DNA replication and repair of damaged DNA. This chain is DNA ligase, found in Chloroflexus aggregans (strain MD-66 / DSM 9485).